A 276-amino-acid chain; its full sequence is Large ribosomal subunit protein uL2 (276 aa).

The tract at residues 210–276 (GRNRHRGIRP…KLIISRRKGK (67 aa)) is disordered. A compositionally biased stretch (basic and acidic residues) spans 230 to 240 (DHPHGGGEGKK). Over residues 255–276 (KGAKTRRKKASDKLIISRRKGK) the composition is skewed to basic residues.

Belongs to the universal ribosomal protein uL2 family. In terms of assembly, part of the 50S ribosomal subunit. Forms a bridge to the 30S subunit in the 70S ribosome.

One of the primary rRNA binding proteins. Required for association of the 30S and 50S subunits to form the 70S ribosome, for tRNA binding and peptide bond formation. It has been suggested to have peptidyltransferase activity; this is somewhat controversial. Makes several contacts with the 16S rRNA in the 70S ribosome. The protein is Large ribosomal subunit protein uL2 of Campylobacter jejuni subsp. jejuni serotype O:6 (strain 81116 / NCTC 11828).